Reading from the N-terminus, the 141-residue chain is Putative 8-oxo-dGTP diphosphatase 2 (141 aa).

The 130-residue stretch at Leu-2 to Asn-131 folds into the Nudix hydrolase domain. The Mg(2+) site is built by Gly-37, Glu-52, Glu-55, and Glu-56. The short motif at Gly-37–Gly-58 is the Nudix box element.

The protein belongs to the Nudix hydrolase family. The cofactor is Mg(2+). Requires Mn(2+) as cofactor.

It catalyses the reaction 8-oxo-dGTP + H2O = 8-oxo-dGMP + diphosphate + H(+). Functionally, may be involved in the GO system responsible for removing an oxidatively damaged form of guanine (7,8-dihydro-8-oxoguanine, 8-oxo-dGTP) from DNA and the nucleotide pool. 8-oxo-dGTP is inserted opposite dA and dC residues of template DNA with almost equal efficiency thus leading to A.T to G.C transversions. MutT specifically degrades 8-oxo-dGTP to the monophosphate. The protein is Putative 8-oxo-dGTP diphosphatase 2 (mutT2) of Mycobacterium tuberculosis (strain CDC 1551 / Oshkosh).